The sequence spans 551 residues: Protein PNS1 (551 aa).

The segment at 1–72 (MSAQEFYQGG…TGGQPVYQDT (72 aa)) is disordered. Topologically, residues 1–94 (MSAQEFYQGG…RMNPRKRVND (94 aa)) are cytoplasmic. Low complexity predominate over residues 8 to 19 (QGGNQRGYQQQQ). Residues 45–63 (PPNYNMKPSQPYASTNPET) are compositionally biased toward polar residues. The chain crosses the membrane as a helical span at residues 95 to 115 (IIPLILFIAAVVGFAVVSGIA). The Extracellular segment spans residues 116–147 (IHGFVQVNGLGGGMGDSSIGRTGSSITLDYHT). The chain crosses the membrane as a helical span at residues 148–168 (VYLLLVVVALGLVIASLYLAA). At 169–177 (LRAFTKIIL) the chain is on the cytoplasmic side. The helical transmembrane segment at 178 to 198 (EVTLALTVILNIGICIYYFII) threads the bilayer. Residues 199 to 200 (QY) are Extracellular-facing. The chain crosses the membrane as a helical span at residues 201 to 221 (WSGAIIFLIIALVSVFFYWGM). Topologically, residues 222–244 (RKRIPLAKLLLQTTIDVTKHHPS) are cytoplasmic. Residues 245–265 (VYVVVFIGLIIQAAVSVWYTF) traverse the membrane as a helical segment. Residues 266–307 (TCIAIYVKWTPGSAACSDGGCSSSKVAGLVFYATFSYLWLSQ) lie on the Extracellular side of the membrane. The helical transmembrane segment at 308–328 (VIGNVILCTLAGGVFGGWYYY) threads the bilayer. At 329-356 (GPRTPGGGVPKRASLLAFVRASTLSLGS) the chain is on the cytoplasmic side. The chain crosses the membrane as a helical span at residues 357–377 (IAFGSLLVTILELLRLILQLF). The Extracellular portion of the chain corresponds to 378 to 386 (RQYEAGQGD). A helical transmembrane segment spans residues 387-407 (MIGSILICIAQCCIGCIQWMV). Residues 408–452 (EYFNKYAYIEIALYGKSYIPAAKDTWRLLKDRGIDALVNDSLVGT) lie on the Cytoplasmic side of the membrane. The helical transmembrane segment at 453–473 (ALMWGAYINGFLCAVLGYFYL) threads the bilayer. Over 474-488 (RFTHPAYNSDGQYSA) the chain is Extracellular. A helical transmembrane segment spans residues 489 to 509 (PVILFSFLIGLNESFTVGSAI). The Cytoplasmic segment spans residues 510-551 (DAGVSTIFVGLGEDPMVLAERSPGLFEMIRQVYPRVVQGVPH).

This sequence belongs to the CTL (choline transporter-like) family.

Its subcellular location is the cell membrane. Probably involved in transport through the plasma membrane. This Cryptococcus neoformans var. neoformans serotype D (strain B-3501A) (Filobasidiella neoformans) protein is Protein PNS1 (PNS1).